Here is a 670-residue protein sequence, read N- to C-terminus: Outer dynein arm-docking complex subunit 1 (670 aa).

Coiled-coil stretches lie at residues 9–155 (SKEV…RYLN), 183–224 (AVRE…EQLH), and 302–381 (NFIN…IQLL). The tract at residues 454-473 (KMAPLQPPDTLEDPPGFEAS) is disordered. At serine 517 the chain carries Phosphoserine. 2 disordered regions span residues 526 to 596 (AGSS…ASSG) and 616 to 670 (VGSS…DSRG). The span at 584 to 596 (GHVTFGSTSASSG) shows a compositional bias: polar residues. Positions 650–670 (SSTGPASSTGPGSSTSKDSRG) are enriched in low complexity.

This sequence belongs to the ODA1/DCC2 family. As to quaternary structure, component of the outer dynein arm-docking complex along with ODAD2, ODAD3, ODAD4 and CLXN. Interacts with ODAD3. Interacts with ODAD4; this interaction may facilitate the recruitment and/or attachment of outer dynein arm docking complex proteins, including ODAD1, ODAD3, and ODAD4 to ciliary axonemes. Interacts with DNAH9. Interacts with MNS1. Interacts with PIERCE1 and PIERCE2; the interactions link the outer dynein arms docking complex (ODA-DC) to the internal microtubule inner proteins (MIP) in cilium axoneme. In terms of tissue distribution, expressed in nasal epithelial cells. Highly expressed in testis and also detected in lung, brain and kidney.

The protein resides in the cytoplasm. Its subcellular location is the cytoskeleton. It localises to the cilium axoneme. Its function is as follows. Component of the outer dynein arm-docking complex (ODA-DC) that mediates outer dynein arms (ODA) binding onto the doublet microtubule. Involved in mediating assembly of both ODAs and their axonemal docking complex onto ciliary microtubules. In Homo sapiens (Human), this protein is Outer dynein arm-docking complex subunit 1.